We begin with the raw amino-acid sequence, 301 residues long: Phosducin-like protein (301 aa).

Threonine 2 bears the N-acetylthreonine mark. A disordered region spans residues 17 to 60 (YSTSEDEDSDHEDKDRGRGAPAISSTPAEAELAGEGISINTGPK). Serine 20, serine 25, serine 226, serine 293, and serine 296 each carry phosphoserine. The 264-residue stretch at 36 to 299 (APAISSTPAE…TCHSEDSDLE (264 aa)) folds into the Phosducin domain. The interval 158–301 (FKQVFEIPSG…HSEDSDLEID (144 aa)) is thioredoxin fold.

It belongs to the phosducin family. Forms a complex with the beta and gamma subunits of the GTP-binding protein, transducin. Interacts with the CCT chaperonin complex.

The protein resides in the cell projection. It localises to the cilium. Its function is as follows. Functions as a co-chaperone for CCT in the assembly of heterotrimeric G protein complexes, facilitates the assembly of both Gbeta-Ggamma and RGS-Gbeta5 heterodimers. Also acts as a positive regulator of hedgehog signaling and regulates ciliary function. The protein is Phosducin-like protein (Pdcl) of Mus musculus (Mouse).